A 154-amino-acid chain; its full sequence is 6,7-dimethyl-8-ribityllumazine synthase (154 aa).

Residues W22, 56–58, and 80–82 each bind 5-amino-6-(D-ribitylamino)uracil; these read AWE and CVV. A (2S)-2-hydroxy-3-oxobutyl phosphate-binding site is contributed by 85-86; sequence DT. H88 (proton donor) is an active-site residue. N113 provides a ligand contact to 5-amino-6-(D-ribitylamino)uracil. Residue R127 coordinates (2S)-2-hydroxy-3-oxobutyl phosphate.

This sequence belongs to the DMRL synthase family. As to quaternary structure, forms an icosahedral capsid composed of 60 subunits, arranged as a dodecamer of pentamers.

It carries out the reaction (2S)-2-hydroxy-3-oxobutyl phosphate + 5-amino-6-(D-ribitylamino)uracil = 6,7-dimethyl-8-(1-D-ribityl)lumazine + phosphate + 2 H2O + H(+). It participates in cofactor biosynthesis; riboflavin biosynthesis; riboflavin from 2-hydroxy-3-oxobutyl phosphate and 5-amino-6-(D-ribitylamino)uracil: step 1/2. Functionally, catalyzes the formation of 6,7-dimethyl-8-ribityllumazine by condensation of 5-amino-6-(D-ribitylamino)uracil with 3,4-dihydroxy-2-butanone 4-phosphate. This is the penultimate step in the biosynthesis of riboflavin. The protein is 6,7-dimethyl-8-ribityllumazine synthase of Xylella fastidiosa (strain M23).